We begin with the raw amino-acid sequence, 74 residues long: Anaphase-promoting complex subunit 13 (74 aa).

The disordered stretch occupies residues 33–53; sequence LNELPDPEQDNGGTTESVKEQ.

Belongs to the APC13 family. In terms of assembly, the mammalian APC/C is composed at least of 14 distinct subunits ANAPC1, ANAPC2, CDC27/APC3, ANAPC4, ANAPC5, CDC16/APC6, ANAPC7, CDC23/APC8, ANAPC10, ANAPC11, CDC26/APC12, ANAPC13, ANAPC15 and ANAPC16 that assemble into a complex of at least 19 chains with a combined molecular mass of around 1.2 MDa; APC/C interacts with FZR1 and FBXO5.

It is found in the nucleus. It functions in the pathway protein modification; protein ubiquitination. Its function is as follows. Component of the anaphase promoting complex/cyclosome (APC/C), a cell cycle-regulated E3 ubiquitin ligase that controls progression through mitosis and the G1 phase of the cell cycle. The APC/C complex acts by mediating ubiquitination and subsequent degradation of target proteins: it mainly mediates the formation of 'Lys-11'-linked polyubiquitin chains and, to a lower extent, the formation of 'Lys-48'- and 'Lys-63'-linked polyubiquitin chains. The APC/C complex catalyzes assembly of branched 'Lys-11'-/'Lys-48'-linked branched ubiquitin chains on target proteins. This is Anaphase-promoting complex subunit 13 (ANAPC13) from Pongo abelii (Sumatran orangutan).